The chain runs to 423 residues: G-protein coupled receptor 83 (423 aa).

A signal peptide spans 1–17; that stretch reads MKVPPVLLLFLLSSVRA. The Extracellular segment spans residues 18–71; it reads TEQPQVVTEHPSMEAALTGPNASSHFWANYTFSDWQNFVGRRRYGAESQNPTVK. N-linked (GlcNAc...) asparagine glycans are attached at residues Asn-38 and Asn-46. The chain crosses the membrane as a helical span at residues 72-92; the sequence is ALLIVAYSFTIVFSLFGNVLV. Topologically, residues 93-107 are cytoplasmic; that stretch reads CHVIFKNQRMHSATS. A helical membrane pass occupies residues 108 to 129; it reads LFIVNLAVADIMITLLNTPFTL. Over 130 to 145 the chain is Extracellular; that stretch reads VRFVNSTWVFGKGMCH. Asn-134 is a glycosylation site (N-linked (GlcNAc...) asparagine). Cysteines 144 and 224 form a disulfide. The chain crosses the membrane as a helical span at residues 146-167; sequence VSRFAQYCSLHVSALTLTAIAV. Over 168–186 the chain is Cytoplasmic; the sequence is DRHQVIMHPLKPRISITKG. Residues 187–208 traverse the membrane as a helical segment; it reads VIYIAVIWVMATFFSLPHAICQ. Residues 209–238 lie on the Extracellular side of the membrane; sequence KLFTFKYSEDIVRSLCLPDFPEPADLFWKY. Residues 239 to 260 form a helical membrane-spanning segment; sequence LDLATFILLYLLPLFIISVAYA. Residues 261–293 lie on the Cytoplasmic side of the membrane; it reads RVAKKLWLCNTIGDVTTEQYLALRRKKKTTVKM. Residues 294-315 form a helical membrane-spanning segment; it reads LVLVVVLFALCWFPLNCYVLLL. The Extracellular portion of the chain corresponds to 316 to 327; sequence SSKAIHTNNALY. Residues 328–348 traverse the membrane as a helical segment; the sequence is FAFHWFAMSSTCYNPFIYCWL. Over 349-423 the chain is Cytoplasmic; sequence NENFRVELKA…SSVEPVVAMS (75 aa). A disordered region spans residues 389-423; that stretch reads SHGRRAPLPNHHLPSSQIQSGKTDLSSVEPVVAMS. Positions 401–414 are enriched in polar residues; the sequence is LPSSQIQSGKTDLS.

The protein belongs to the G-protein coupled receptor 1 family. Predominantly expressed in the brain, with moderate expression in the hypothalamus. Expressed in the thymus.

The protein resides in the cell membrane. Its function is as follows. G-protein coupled receptor for PEN, a neuropeptide produced from the precursor protein, proSAAS (encoded by PCSK1N). Acts through a G(i)- and G(q)-alpha-alpha-mediated pathway in response to PEN. Plays a role in food intake and body weight regulation. May contribute to the regulation of anxiety-related behaviors. The polypeptide is G-protein coupled receptor 83 (Mus musculus (Mouse)).